The chain runs to 467 residues: Nuclear distribution protein nudF 1 (467 aa).

The LisH domain occupies 9-41 (QAEELHKSIIAYLASVNLSESATTLRAELGDAV). Positions 60-87 (TSVVRLQKKIMDLESRCAALQSELDSAT) form a coiled coil. WD repeat units follow at residues 113-154 (SHRS…RTVK), 156-196 (HTKA…KNIR), 200-247 (GHDH…CVKT), 250-289 (GHVDWVRAVAPSIDGRFLFAAGDDRIPRLWDLSAAETRST), 292-352 (GHEH…IKTL), 354-393 (GHDNWVRALAFHPGGKYLLSVSDDKTIRCWDLTQECKCVR), 398-428 (THEHFVTCLRWAPPLIKDSGANGDAGANGTP), and 429-466 (AATTTSNGARQDPNAANKISIRCVIATGSVDQKVRVFA). Residues 417-437 (GANGDAGANGTPAATTTSNGA) show a composition bias toward low complexity. Positions 417–441 (GANGDAGANGTPAATTTSNGARQDP) are disordered.

It belongs to the WD repeat LIS1/nudF family. Self-associates. Interacts with nudE and dynein.

The protein localises to the cytoplasm. The protein resides in the cytoskeleton. It localises to the spindle pole. Positively regulates the activity of the minus-end directed microtubule motor protein dynein. May enhance dynein-mediated microtubule sliding by targeting dynein to the microtubule plus end. Required for nuclear migration during vegetative growth as well as development. Required for retrograde early endosome (EE) transport from the hyphal tip. Required for localization of dynein to the mitotic spindle poles. Recruits additional proteins to the dynein complex at SPBs. The polypeptide is Nuclear distribution protein nudF 1 (Aspergillus clavatus (strain ATCC 1007 / CBS 513.65 / DSM 816 / NCTC 3887 / NRRL 1 / QM 1276 / 107)).